Consider the following 134-residue polypeptide: Putative pre-16S rRNA nuclease (134 aa).

The protein belongs to the YqgF nuclease family.

Its subcellular location is the cytoplasm. Could be a nuclease involved in processing of the 5'-end of pre-16S rRNA. This chain is Putative pre-16S rRNA nuclease, found in Helicobacter pylori (strain HPAG1).